The following is a 607-amino-acid chain: Runt-related transcription factor 2 (607 aa).

An interaction with IFI204 region spans residues 1-88 (MLHSPHKQPQ…TMASNSLFSA (88 aa)). Residues 100 to 112 (PSTSRRFSPPSSS) show a composition bias toward low complexity. A disordered region spans residues 100-126 (PSTSRRFSPPSSSLQPGKMSDVSPVVA). Residues 187–315 (TMVEIIADHP…TVDGPREPRR (129 aa)) form the Runt domain. Residues 242-258 (VMAGNDENYSAELRNAS) are required for interaction with FOXO1. A disordered region spans residues 307-430 (VDGPREPRRH…VPRRISDDDT (124 aa)). A Glycyl lysine isopeptide (Lys-Gly) (interchain with G-Cter in SUMO2) cross-link involves residue K324. R353 is modified (asymmetric dimethylarginine). The span at 353–412 (RPSLNSAPSPFNPQGQSQITDPRQAQSSPPWSYDQSYPSYLSQMTSPSIHSTTPLSSTRG) shows a compositional bias: polar residues. Residues 422-525 (PRRISDDDTA…SQSQSGPFQT (104 aa)) form an interaction with KAT6A region. The interval 460–554 (RQFPSISSLT…VPGGDRSPSR (95 aa)) is interaction with KAT6B. Phosphoserine; by CDK1 is present on S537. Residues 548–607 (GDRSPSRMVPPCTTTSNGSTLLNPNLPNQNDGVDADGSHSSSPTVLNSSGRMDESVWRPY) form a disordered region. Composition is skewed to polar residues over residues 559–578 (CTTTSNGSTLLNPNLPNQND) and 585–597 (SHSSSPTVLNSSG). A compositionally biased stretch (basic and acidic residues) spans 598-607 (RMDESVWRPY).

In terms of assembly, heterodimer of an alpha and a beta subunit. The alpha subunit binds DNA as a monomer and through the Runt domain. DNA-binding is increased by heterodimerization. Interacts with XRCC6 (Ku70) and XRCC5 (Ku80). Interacts with CCNB1, KAT6A and KAT6B. Interacts with HIVEP3. Interacts with IFI204. Interaction with SATB2; the interaction results in enhanced DNA binding and transactivation by these transcription factors. Binds to HIPK3. Interacts with FOXO1 (via a C-terminal region); the interaction inhibits RUNX2 transcriptional activity towards BGLAP. Interacts with FOXP3. Interacts with TMEM119. Interacts with OLFM2. Interacts with IPO7; the interaction inhibits RUNX2 nuclear translocation in osteoblasts. Interacts with DDX5. In terms of processing, phosphorylated; probably by MAP kinases (MAPK). Phosphorylation by HIPK3 is required for the SPEN/MINT and FGF2 transactivation during osteoblastic differentiation. Phosphorylation at Ser-537 by CDK1 promotes endothelial cell proliferation required for tumor angiogenesis probably by facilitating cell cycle progression. In terms of tissue distribution, found in thymus and testis, T-cell lines but not in B-cell lines. Isoform 2 is exclusively found in bone, particularly in osteoblasts; isoforms 3 and 4 are expressed in T-cell lines; isoforms 5, 6, 7, 8 and 9 can be found in osteoblasts and osteosarcoma cell lines.

The protein localises to the nucleus. It localises to the cytoplasm. Functionally, transcription factor involved in osteoblastic differentiation and skeletal morphogenesis. Essential for the maturation of osteoblasts and both intramembranous and endochondral ossification. CBF binds to the core site, 5'-PYGPYGGT-3', of a number of enhancers and promoters, including murine leukemia virus, polyomavirus enhancer, T-cell receptor enhancers, osteocalcin, osteopontin, bone sialoprotein, alpha 1(I) collagen, LCK, IL-3 and GM-CSF promoters. Inhibits KAT6B-dependent transcriptional activation. In osteoblasts, supports transcription activation: synergizes with SPEN/MINT to enhance FGFR2-mediated activation of the osteocalcin FGF-responsive element (OCFRE). This chain is Runt-related transcription factor 2 (Runx2), found in Mus musculus (Mouse).